Consider the following 159-residue polypeptide: Prs ADP-ribosylating antitoxin (159 aa).

The interval 99–159 (EDMVEESGET…LAQIQSGAFA (61 aa)) is sufficient to neutralize toxin.

The protein belongs to the MbcA/ParS/Xre antitoxin family. Forms heterotetrameric ParS(2)-ParT(2) complexes. The 2 antitoxin fragments do not make contact in the crystal structure.

Functionally, antitoxin component of a type II toxin-antitoxin (TA) system. Neutralizes the bacteriostatic effect of cognate toxin ParT by inserting into its active site. The polypeptide is Prs ADP-ribosylating antitoxin (Sphingobium sp. (strain YBL2)).